Here is a 202-residue protein sequence, read N- to C-terminus: Recombination protein RecR (202 aa).

The C4-type zinc-finger motif lies at cysteine 56–cysteine 71. The 101-residue stretch at threonine 79–proline 179 folds into the Toprim domain.

This sequence belongs to the RecR family.

Its function is as follows. May play a role in DNA repair. It seems to be involved in an RecBC-independent recombinational process of DNA repair. It may act with RecF and RecO. The protein is Recombination protein RecR of Rhodococcus jostii (strain RHA1).